The following is a 272-amino-acid chain: Shikimate dehydrogenase (NADP(+)) (272 aa).

Shikimate-binding positions include 14 to 16 and Thr61; that span reads SKS. Lys65 acts as the Proton acceptor in catalysis. Glu77 serves as a coordination point for NADP(+). Shikimate contacts are provided by Asn86 and Asp102. NADP(+) is bound by residues 126 to 130, 149 to 154, and Met213; these read GAGGA and NRTVSR. Tyr215 serves as a coordination point for shikimate. Gly237 contributes to the NADP(+) binding site.

The protein belongs to the shikimate dehydrogenase family. Homodimer.

It catalyses the reaction shikimate + NADP(+) = 3-dehydroshikimate + NADPH + H(+). The protein operates within metabolic intermediate biosynthesis; chorismate biosynthesis; chorismate from D-erythrose 4-phosphate and phosphoenolpyruvate: step 4/7. Its function is as follows. Involved in the biosynthesis of the chorismate, which leads to the biosynthesis of aromatic amino acids. Catalyzes the reversible NADPH linked reduction of 3-dehydroshikimate (DHSA) to yield shikimate (SA). The protein is Shikimate dehydrogenase (NADP(+)) of Shigella dysenteriae serotype 1 (strain Sd197).